The primary structure comprises 279 residues: Acyl-coenzyme A thioesterase MBLAC2 (279 aa).

An N-acetylserine modification is found at S2. Residues H83, H85, D87, H88, H170, D189, and H231 each coordinate Zn(2+). C254 carries S-palmitoyl cysteine lipidation.

It belongs to the metallo-beta-lactamase superfamily. Glyoxalase II family. It depends on Zn(2+) as a cofactor. In terms of processing, palmitoylated on Cys-254 by ZDHHC20.

The protein localises to the endoplasmic reticulum membrane. Its subcellular location is the cell membrane. It carries out the reaction hexadecanoyl-CoA + H2O = hexadecanoate + CoA + H(+). It catalyses the reaction dodecanoyl-CoA + H2O = dodecanoate + CoA + H(+). The catalysed reaction is tetradecanoyl-CoA + H2O = tetradecanoate + CoA + H(+). The enzyme catalyses octadecanoyl-CoA + H2O = octadecanoate + CoA + H(+). It carries out the reaction a beta-lactam + H2O = a substituted beta-amino acid. Its activity is regulated as follows. Beta-lactamase activity is inhibited by sulbactam. Acyl-CoA thioesterases are a group of enzymes that catalyze the hydrolysis of acyl-CoAs to the free fatty acid and coenzyme A (CoASH), providing the potential to regulate intracellular levels of acyl-CoAs, free fatty acids and CoASH. Has an acyl-CoA thioesterase activity towards the long chain fatty acyl-CoA thioester palmitoyl-CoA (hexadecanoyl-CoA; C16:0-CoA). Displays a substrate preference for fatty acyl-CoAs with chain-lengths C12-C18. Possesses beta-lactamase activity, catalyzing the hydrolysis of penicillin G and nitrocefin. Exhibits no activity towards other beta-lactam antibiotic classes including cephalosporins (cefotaxime) and carbapenems (imipenem). This chain is Acyl-coenzyme A thioesterase MBLAC2 (MBLAC2), found in Homo sapiens (Human).